The following is an 87-amino-acid chain: Large ribosomal subunit protein eL20 (87 aa).

It belongs to the eukaryotic ribosomal protein eL20 family. Part of the 50S ribosomal subunit. Binds 23S rRNA.

In Hyperthermus butylicus (strain DSM 5456 / JCM 9403 / PLM1-5), this protein is Large ribosomal subunit protein eL20.